We begin with the raw amino-acid sequence, 180 residues long: Crossover junction endodeoxyribonuclease RuvC (180 aa).

Catalysis depends on residues D7, E66, and D138. The Mg(2+) site is built by D7, E66, and D138.

This sequence belongs to the RuvC family. Homodimer which binds Holliday junction (HJ) DNA. The HJ becomes 2-fold symmetrical on binding to RuvC with unstacked arms; it has a different conformation from HJ DNA in complex with RuvA. In the full resolvosome a probable DNA-RuvA(4)-RuvB(12)-RuvC(2) complex forms which resolves the HJ. Mg(2+) is required as a cofactor.

It is found in the cytoplasm. The enzyme catalyses Endonucleolytic cleavage at a junction such as a reciprocal single-stranded crossover between two homologous DNA duplexes (Holliday junction).. In terms of biological role, the RuvA-RuvB-RuvC complex processes Holliday junction (HJ) DNA during genetic recombination and DNA repair. Endonuclease that resolves HJ intermediates. Cleaves cruciform DNA by making single-stranded nicks across the HJ at symmetrical positions within the homologous arms, yielding a 5'-phosphate and a 3'-hydroxyl group; requires a central core of homology in the junction. The consensus cleavage sequence is 5'-(A/T)TT(C/G)-3'. Cleavage occurs on the 3'-side of the TT dinucleotide at the point of strand exchange. HJ branch migration catalyzed by RuvA-RuvB allows RuvC to scan DNA until it finds its consensus sequence, where it cleaves and resolves the cruciform DNA. This is Crossover junction endodeoxyribonuclease RuvC from Janthinobacterium sp. (strain Marseille) (Minibacterium massiliensis).